Reading from the N-terminus, the 1585-residue chain is Histone acetyltransferase lsy-12 (1585 aa).

2 disordered regions span residues 1-37 (MGKK…ARRE) and 279-491 (GPQH…DDPV). Over residues 23 to 37 (PKDRTARPTAAARRE) the composition is skewed to basic and acidic residues. Polar residues predominate over residues 279–296 (GPQHENVTVSENVLSTES). Positions 302-312 (TETKRLHDSSR) are enriched in basic and acidic residues. Composition is skewed to polar residues over residues 355–364 (LLSNPHSTPV) and 411–426 (SRLS…SNDL). The segment covering 431 to 440 (SAPSSSSAAS) has biased composition (low complexity). A compositionally biased stretch (basic residues) spans 453 to 469 (QQRRKGNQSAARSRKIK). Residues 477-491 (QEDEPMELDSDDDPV) are compositionally biased toward acidic residues. The MYST-type HAT domain occupies 544–830 (EQARLPERIH…YDPECLDWVP (287 aa)). A C2HC MYST-type zinc finger spans residues 577–602 (LFICEFCFFYARSDEIMQNHAKKCML). K644 is subject to N6-acetyllysine; by autocatalysis. Residue 685–689 (SCIMT) coordinates acetyl-CoA. E720 (proton donor/acceptor) is an active-site residue. 2 residues coordinate acetyl-CoA: S724 and K815. Composition is skewed to basic and acidic residues over residues 844 to 855 (SKEEIEQDEQRR) and 947 to 956 (VLDKSNIREE). Disordered regions lie at residues 844–903 (SKEE…LKHE), 927–1262 (EENK…IGKS), 1286–1373 (ESTA…ASNH), and 1431–1507 (HHQF…VHPQ). Polar residues predominate over residues 977-999 (NKCNNTESEPNPSGRKTSATSSG). The segment covering 1011–1022 (TEEEEEDDDPTD) has biased composition (acidic residues). Over residues 1029 to 1046 (DDEKPFETSVNKEKNEKS) the composition is skewed to basic and acidic residues. A compositionally biased stretch (basic residues) spans 1047–1060 (RRGKKVSKKRRSVA). Basic and acidic residues-rich tracts occupy residues 1070–1081 (VRDRDEPKKAEN) and 1135–1151 (DIPK…AYDR). Positions 1164-1173 (PTPDSYHSSP) are enriched in low complexity. Over residues 1185-1194 (LMQAQQNIYQ) the composition is skewed to polar residues. Residues 1196–1207 (NDCHFAENDSKP) show a composition bias toward basic and acidic residues. 2 stretches are compositionally biased toward polar residues: residues 1298-1317 (AGPS…NTTP) and 1324-1333 (HPNSQQQATP). Positions 1482 to 1493 (QHQQQQPQQPQQ) are enriched in low complexity.

This sequence belongs to the MYST (SAS/MOZ) family.

It carries out the reaction L-lysyl-[protein] + acetyl-CoA = N(6)-acetyl-L-lysyl-[protein] + CoA + H(+). Functionally, probable histone acetyltransferase. Required to initiate and then maintain lateralized gene expression in the ASE sensory neurons. Involved in determining cell fate in the ASE neurons. The polypeptide is Histone acetyltransferase lsy-12 (Caenorhabditis elegans).